We begin with the raw amino-acid sequence, 999 residues long: Transcription-repair-coupling factor (999 aa).

The Helicase ATP-binding domain maps to 499–656 (DLSSHRVMDR…LSQIKGISSL (158 aa)). 512–519 (GDVGFGKT) provides a ligand contact to ATP. The DEEH box signature appears at 609–612 (DEEH). The Helicase C-terminal domain occupies 677–833 (LLKEIIYREL…SVAYHDLEIR (157 aa)).

The protein in the N-terminal section; belongs to the UvrB family. It in the C-terminal section; belongs to the helicase family. RecG subfamily.

It localises to the cytoplasm. Couples transcription and DNA repair by recognizing RNA polymerase (RNAP) stalled at DNA lesions. Mediates ATP-dependent release of RNAP and its truncated transcript from the DNA, and recruitment of nucleotide excision repair machinery to the damaged site. The chain is Transcription-repair-coupling factor from Helicobacter pylori (strain ATCC 700392 / 26695) (Campylobacter pylori).